The chain runs to 113 residues: Defense protein 2 (113 aa).

The protein belongs to the attacin/sarcotoxin-2 family.

The protein localises to the secreted. Its function is as follows. Has antibacterial activity against both Gram-positive and Gram-negative bacteria. This chain is Defense protein 2, found in Lonomia obliqua (Moth).